The primary structure comprises 275 residues: Probable dual specificity protein phosphatase DDB_G0271350 (275 aa).

One can recognise a Tyrosine-protein phosphatase domain in the interval 2–143; sequence GISMILDNFL…LCDLELKLTN (142 aa). C87 functions as the Phosphocysteine intermediate in the catalytic mechanism.

It belongs to the protein-tyrosine phosphatase family. Non-receptor class dual specificity subfamily.

The enzyme catalyses O-phospho-L-tyrosyl-[protein] + H2O = L-tyrosyl-[protein] + phosphate. The catalysed reaction is O-phospho-L-seryl-[protein] + H2O = L-seryl-[protein] + phosphate. It carries out the reaction O-phospho-L-threonyl-[protein] + H2O = L-threonyl-[protein] + phosphate. Has a dual specificity toward Ser/Thr and Tyr-containing proteins. The chain is Probable dual specificity protein phosphatase DDB_G0271350 from Dictyostelium discoideum (Social amoeba).